A 427-amino-acid polypeptide reads, in one-letter code: Adenylosuccinate synthetase (427 aa).

GTP-binding positions include Gly-12 to Lys-18 and Gly-40 to Thr-42. The active-site Proton acceptor is Asp-13. Mg(2+) is bound by residues Asp-13 and Gly-40. IMP contacts are provided by residues Asp-13 to Lys-16, Asn-38 to His-41, Thr-128, Arg-142, Gln-223, Thr-238, and Arg-302. The active-site Proton donor is His-41. Val-298–Arg-304 contributes to the substrate binding site. Residues Arg-304, Lys-330 to Asp-332, and Gly-412 to Gly-414 contribute to the GTP site.

It belongs to the adenylosuccinate synthetase family. In terms of assembly, homodimer. Requires Mg(2+) as cofactor.

It localises to the cytoplasm. It catalyses the reaction IMP + L-aspartate + GTP = N(6)-(1,2-dicarboxyethyl)-AMP + GDP + phosphate + 2 H(+). Its pathway is purine metabolism; AMP biosynthesis via de novo pathway; AMP from IMP: step 1/2. In terms of biological role, plays an important role in the de novo pathway of purine nucleotide biosynthesis. Catalyzes the first committed step in the biosynthesis of AMP from IMP. This chain is Adenylosuccinate synthetase, found in Frankia alni (strain DSM 45986 / CECT 9034 / ACN14a).